A 110-amino-acid polypeptide reads, in one-letter code: Nucleoid-associated protein CbuK_1603 (110 aa).

This sequence belongs to the YbaB/EbfC family. In terms of assembly, homodimer.

It localises to the cytoplasm. Its subcellular location is the nucleoid. Functionally, binds to DNA and alters its conformation. May be involved in regulation of gene expression, nucleoid organization and DNA protection. This chain is Nucleoid-associated protein CbuK_1603, found in Coxiella burnetii (strain CbuK_Q154) (Coxiella burnetii (strain Q154)).